Reading from the N-terminus, the 492-residue chain is N-succinylglutamate 5-semialdehyde dehydrogenase (492 aa).

220–225 (GSASTG) provides a ligand contact to NAD(+). Residues glutamate 243 and cysteine 277 contribute to the active site.

It belongs to the aldehyde dehydrogenase family. AstD subfamily.

The catalysed reaction is N-succinyl-L-glutamate 5-semialdehyde + NAD(+) + H2O = N-succinyl-L-glutamate + NADH + 2 H(+). The protein operates within amino-acid degradation; L-arginine degradation via AST pathway; L-glutamate and succinate from L-arginine: step 4/5. Functionally, catalyzes the NAD-dependent reduction of succinylglutamate semialdehyde into succinylglutamate. The chain is N-succinylglutamate 5-semialdehyde dehydrogenase from Salmonella typhi.